The sequence spans 291 residues: Aliphatic sulfonates import ATP-binding protein SsuB 2 (291 aa).

The ABC transporter domain maps to 26 to 247 (LRVRGIAKRY…APGLPALASI (222 aa)). 58–65 (GRSGCGKS) is an ATP binding site. A disordered region spans residues 264-291 (PAAPKAQTRHGPPRGATAQDTSPLQRIL). Positions 281-291 (AQDTSPLQRIL) are enriched in polar residues.

It belongs to the ABC transporter superfamily. Aliphatic sulfonates importer (TC 3.A.1.17.2) family. The complex is composed of two ATP-binding proteins (SsuB), two transmembrane proteins (SsuC) and a solute-binding protein (SsuA).

The protein resides in the cell inner membrane. It carries out the reaction ATP + H2O + aliphatic sulfonate-[sulfonate-binding protein]Side 1 = ADP + phosphate + aliphatic sulfonateSide 2 + [sulfonate-binding protein]Side 1.. Part of the ABC transporter complex SsuABC involved in aliphatic sulfonates import. Responsible for energy coupling to the transport system. This Xanthomonas axonopodis pv. citri (strain 306) protein is Aliphatic sulfonates import ATP-binding protein SsuB 2.